We begin with the raw amino-acid sequence, 272 residues long: Cell division protein FtsQ (272 aa).

Residues 1–43 (MEYNPPNTRERIAARRQRLRQPSSEPAIPGWRRRFIDGLQSGR) are Cytoplasmic-facing. The chain crosses the membrane as a helical span at residues 44–64 (IVSGAVFVVSCLALFYVLFSS). The Extracellular segment spans residues 65–272 (QFRVQTVEVV…FYQNRTDGRS (208 aa)). A POTRA domain is found at 66–133 (FRVQTVEVVG…DRARIVIVER (68 aa)).

The protein belongs to the FtsQ/DivIB family. FtsQ subfamily.

Its subcellular location is the cell membrane. Functionally, essential cell division protein. The sequence is that of Cell division protein FtsQ from Chloroflexus aggregans (strain MD-66 / DSM 9485).